The chain runs to 1223 residues: WD repeat-containing protein 11 (1223 aa).

2 WD repeats span residues Lys59 to Glu108 and Glu111 to Lys154. Ser205 and Ser209 each carry phosphoserine. The stretch at Lys354–Asn393 is one WD 3 repeat. A phosphoserine mark is found at Ser401 and Ser405. WD repeat units follow at residues Arg470–Glu509, Asn565–Glu604, Gly707–Ile744, Thr746–Ser786, Asn792–Arg830, and Ala892–Ser939.

In terms of assembly, component of the complex WDR11 composed of C17orf75, FAM91A1 and WDR11; FAM91A1 and WDR11 are required for proper location of the complex. Interacts with GLI3; the interaction associateS EMX1 with GLI3. Interacts with TBC1D23; this interaction may be indirect and recruits TBC1D23 to AP-1-derived vesicles. Interacts (via the N-terminal and the central portion of the protein) with EMX1. In terms of tissue distribution, broadly expressed in various organs including brain, eye,ear, lung, heart, kideny and gonads. Cerebral cortex. The entire developing central nervous system, except for the spinal cord, reveals expression. Expressed in the neuroepithelium, including the diencephalic region that gives rise to hypothalamic neurons. In the adult brain, intense expression is restricted to the olfactory bulb, the olfaction-related piriform cortex, the granule cell layer of the cerebellum, and neurons of the hippocampal formation. The brain demonstrated expression scattered throughout the hypothalamus, sometimes in clusters of neurons.

It is found in the cytoplasm. The protein localises to the cytoskeleton. The protein resides in the cilium basal body. Its subcellular location is the nucleus. It localises to the cilium axoneme. It is found in the cytoplasmic vesicle. The protein localises to the golgi apparatus. The protein resides in the trans-Golgi network. Its function is as follows. Involved in the Hedgehog (Hh) signaling pathway, is essential for normal ciliogenesis. Regulates the proteolytic processing of GLI3 and cooperates with the transcription factor EMX1 in the induction of downstream Hh pathway gene expression and gonadotropin-releasing hormone production. WDR11 complex facilitates the tethering of Adaptor protein-1 complex (AP-1)-derived vesicles. WDR11 complex acts together with TBC1D23 to facilitate the golgin-mediated capture of vesicles generated using AP-1. The protein is WD repeat-containing protein 11 (Wdr11) of Mus musculus (Mouse).